Reading from the N-terminus, the 367-residue chain is Cytochrome P450 119 (367 aa).

Heme is bound by residues His76, Arg80, Thr257, Arg259, His315, and Cys317.

The protein belongs to the cytochrome P450 family. It depends on heme as a cofactor.

Its subcellular location is the cytoplasm. In Sulfurisphaera tokodaii (strain DSM 16993 / JCM 10545 / NBRC 100140 / 7) (Sulfolobus tokodaii), this protein is Cytochrome P450 119 (cyp119).